Here is a 64-residue protein sequence, read N- to C-terminus: Toxin BmCa-1 (64 aa).

The first 18 residues, 1-18, serve as a signal peptide directing secretion; sequence MNTFVVVFLLLTAILCHA. Positions 19 to 27 are excised as a propeptide; that stretch reads EHALDETAR. 3 disulfides stabilise this stretch: C29/C43, C36/C49, and C42/C58.

It belongs to the scorpion calcin-like family. As to expression, expressed by the venom gland.

Its subcellular location is the secreted. Its function is as follows. May increase intracellular calcium release through the activation of nuclear inositol 1,4,5-trisphosphate receptors (ITPR) of cardiomyocytes, thereby causing an increase in the contraction frequency of these cells. This is Toxin BmCa-1 from Olivierus martensii (Manchurian scorpion).